Reading from the N-terminus, the 421-residue chain is 4-hydroxy-3-methylbut-2-en-1-yl diphosphate synthase (flavodoxin) (421 aa).

4 residues coordinate [4Fe-4S] cluster: Cys-298, Cys-301, Cys-344, and Glu-351.

It belongs to the IspG family. It depends on [4Fe-4S] cluster as a cofactor.

The catalysed reaction is (2E)-4-hydroxy-3-methylbut-2-enyl diphosphate + oxidized [flavodoxin] + H2O + 2 H(+) = 2-C-methyl-D-erythritol 2,4-cyclic diphosphate + reduced [flavodoxin]. It participates in isoprenoid biosynthesis; isopentenyl diphosphate biosynthesis via DXP pathway; isopentenyl diphosphate from 1-deoxy-D-xylulose 5-phosphate: step 5/6. In terms of biological role, converts 2C-methyl-D-erythritol 2,4-cyclodiphosphate (ME-2,4cPP) into 1-hydroxy-2-methyl-2-(E)-butenyl 4-diphosphate. The protein is 4-hydroxy-3-methylbut-2-en-1-yl diphosphate synthase (flavodoxin) of Neisseria meningitidis serogroup B (strain ATCC BAA-335 / MC58).